Here is a 210-residue protein sequence, read N- to C-terminus: N-(5'-phosphoribosyl)anthranilate isomerase (210 aa).

Belongs to the TrpF family.

It carries out the reaction N-(5-phospho-beta-D-ribosyl)anthranilate = 1-(2-carboxyphenylamino)-1-deoxy-D-ribulose 5-phosphate. Its pathway is amino-acid biosynthesis; L-tryptophan biosynthesis; L-tryptophan from chorismate: step 3/5. This is N-(5'-phosphoribosyl)anthranilate isomerase from Crocosphaera subtropica (strain ATCC 51142 / BH68) (Cyanothece sp. (strain ATCC 51142)).